Reading from the N-terminus, the 542-residue chain is Sterile alpha motif domain-containing protein 11 (542 aa).

Positions 268–364 are disordered; sequence LLALPPQGPP…GRGLLSGSTL (97 aa). The segment covering 273–285 has biased composition (pro residues); it reads PQGPPGPGPPIPP. T342 is subject to Phosphothreonine. Residues 404 to 469 form the SAM domain; that stretch reads WTVDDVCNFV…AQVAKRLGRV (66 aa). Residues 486 to 542 form a disordered region; it reads LQAPELSPGHQPLSPATTTSPYEGTHLPTGQASPKQENGSGTIALLSGAPDPSQLLQ. S499 carries the phosphoserine modification. The span at 499–526 shows a compositional bias: polar residues; that stretch reads SPATTTSPYEGTHLPTGQASPKQENGSG.

As to quaternary structure, self-associates. Component of a Polycomb group (PcG) multiprotein PRC1-like complex. Interacts with SAMD7 and PHC2. In terms of tissue distribution, expressed in the outer nuclear layer of rod photoreceptors in the retina (at protein level). Predominantly expressed in retinal photoreceptors and pineal gland.

The protein resides in the nucleus. Component of a Polycomb group (PcG) multiprotein PRC1-like complex, essential for establishing rod photoreceptor cell identity and function by silencing nonrod gene expression in developing rod photoreceptor cells. The polypeptide is Sterile alpha motif domain-containing protein 11 (Samd11) (Mus musculus (Mouse)).